Reading from the N-terminus, the 122-residue chain is Large ribosomal subunit protein uL14c (122 aa).

The protein belongs to the universal ribosomal protein uL14 family. Part of the 50S ribosomal subunit.

It localises to the plastid. Its subcellular location is the chloroplast. In terms of biological role, binds to 23S rRNA. This Anthoceros angustus (Hornwort) protein is Large ribosomal subunit protein uL14c.